Here is a 178-residue protein sequence, read N- to C-terminus: Large ribosomal subunit protein uL5 (178 aa).

It belongs to the universal ribosomal protein uL5 family. As to quaternary structure, part of the 50S ribosomal subunit; part of the 5S rRNA/L5/L18/L25 subcomplex. Contacts the 5S rRNA and the P site tRNA. Forms a bridge to the 30S subunit in the 70S ribosome.

Functionally, this is one of the proteins that bind and probably mediate the attachment of the 5S RNA into the large ribosomal subunit, where it forms part of the central protuberance. In the 70S ribosome it contacts protein S13 of the 30S subunit (bridge B1b), connecting the 2 subunits; this bridge is implicated in subunit movement. Contacts the P site tRNA; the 5S rRNA and some of its associated proteins might help stabilize positioning of ribosome-bound tRNAs. This chain is Large ribosomal subunit protein uL5, found in Acinetobacter baumannii (strain AB0057).